Reading from the N-terminus, the 702-residue chain is Neurochondrin (702 aa).

The protein belongs to the neurochondrin family.

It is found in the cytoplasm. It localises to the cytosol. The protein localises to the cell projection. Its subcellular location is the dendrite. The protein resides in the postsynapse. Its function is as follows. Probably involved in signal transduction, in the nervous system. Required for the spatial learning process. May also be involved in neurite outgrowth. In Gallus gallus (Chicken), this protein is Neurochondrin (NCDN).